Here is a 195-residue protein sequence, read N- to C-terminus: MTYGLILALVFGYLLGSIPFGLLLTRAAGLGDVRKIGSGNIGATNVLRTGNKGLAAATLLLDALKGTAAVLIAGHFAPETAVWAGLGAFLGHLFPVWLGFKGGKGVATYLGVLIGLAWQVALIFAVIWLAMAFLFRYSSLAALTAAVIVPIALYFLSAPQIAVLFVVMSIIVFIKHRANISRLLAGTEGKIGAKG.

Helical transmembrane passes span 4–24 (GLILALVFGYLLGSIPFGLLL), 53–73 (GLAAATLLLDALKGTAAVLIA), 80–100 (TAVWAGLGAFLGHLFPVWLGF), 110–130 (LGVLIGLAWQVALIFAVIWLA), 133–153 (FLFRYSSLAALTAAVIVPIAL), and 154–174 (YFLSAPQIAVLFVVMSIIVFI).

This sequence belongs to the PlsY family. As to quaternary structure, probably interacts with PlsX.

Its subcellular location is the cell inner membrane. It catalyses the reaction an acyl phosphate + sn-glycerol 3-phosphate = a 1-acyl-sn-glycero-3-phosphate + phosphate. The protein operates within lipid metabolism; phospholipid metabolism. Functionally, catalyzes the transfer of an acyl group from acyl-phosphate (acyl-PO(4)) to glycerol-3-phosphate (G3P) to form lysophosphatidic acid (LPA). This enzyme utilizes acyl-phosphate as fatty acyl donor, but not acyl-CoA or acyl-ACP. The chain is Glycerol-3-phosphate acyltransferase from Mesorhizobium japonicum (strain LMG 29417 / CECT 9101 / MAFF 303099) (Mesorhizobium loti (strain MAFF 303099)).